A 141-amino-acid chain; its full sequence is Putative antiporter subunit mnhB2 (141 aa).

The next 4 helical transmembrane spans lie at 10–30 (TVTK…FFAG), 35–55 (GGGF…FLAF), 70–90 (ILMI…TFFG), and 114–134 (ITLF…TVML).

Belongs to the CPA3 antiporters (TC 2.A.63) subunit B family. In terms of assembly, may form a heterooligomeric complex that consists of seven subunits: mnhA2, mnhB2, mnhC2, mnhD2, mnhE2, mnhF2 and mnhG2.

It is found in the cell membrane. This is Putative antiporter subunit mnhB2 (mnhB2) from Staphylococcus aureus (strain MRSA252).